Here is a 331-residue protein sequence, read N- to C-terminus: Probable staphylococcal-like nuclease CAN1 (331 aa).

The N-myristoyl glycine moiety is linked to residue Gly2. Cys10 carries the S-palmitoyl cysteine lipid modification. The region spanning 136-313 is the TNase-like domain; that stretch reads HTLPVDAKAV…QSGRKGLWAA (178 aa). Asp149 lines the Ca(2+) pocket. Residue Arg220 is part of the active site. Residue Asp225 coordinates Ca(2+). Residues Glu228 and Arg262 contribute to the active site. Positions 306-331 are disordered; that stretch reads GRKGLWAASRPQKPWEWRRDKRNGTA. Basic and acidic residues predominate over residues 318 to 331; sequence KPWEWRRDKRNGTA.

It belongs to the thermonuclease family. It depends on Ca(2+) as a cofactor.

The protein resides in the cell membrane. Its function is as follows. Enzyme that catalyzes the hydrolysis of both DNA and RNA at the 5' position of the phosphodiester bond. The polypeptide is Probable staphylococcal-like nuclease CAN1 (Oryza sativa subsp. japonica (Rice)).